The sequence spans 230 residues: Octanoyltransferase (230 aa).

The BPL/LPL catalytic domain occupies 40–218 (PSLDDVLILL…CFAEVFGVEL (179 aa)). Substrate is bound by residues 82-89 (RGGEVTYH), 149-151 (AIG), and 162-164 (GFA). The active-site Acyl-thioester intermediate is cysteine 180.

The protein belongs to the LipB family.

It localises to the cytoplasm. It carries out the reaction octanoyl-[ACP] + L-lysyl-[protein] = N(6)-octanoyl-L-lysyl-[protein] + holo-[ACP] + H(+). Its pathway is protein modification; protein lipoylation via endogenous pathway; protein N(6)-(lipoyl)lysine from octanoyl-[acyl-carrier-protein]: step 1/2. Its function is as follows. Catalyzes the transfer of endogenously produced octanoic acid from octanoyl-acyl-carrier-protein onto the lipoyl domains of lipoate-dependent enzymes. Lipoyl-ACP can also act as a substrate although octanoyl-ACP is likely to be the physiological substrate. This Nostoc punctiforme (strain ATCC 29133 / PCC 73102) protein is Octanoyltransferase.